A 347-amino-acid chain; its full sequence is Dolichyl-diphosphooligosaccharide--protein glycosyltransferase subunit TUSC3 (347 aa).

Positions 1-41 are cleaved as a signal peptide; that stretch reads MSARAAPSRRRQAGRRLRYLPTGSFPFLLLLLLLCIQLGGG. Residues 42 to 196 are Lumenal-facing; it reads QKKKENLLAE…DVHIRVFRPP (155 aa). The region spanning 59–187 is the Thioredoxin domain; it reads WSSRRSIFRM…LAKWIADRTD (129 aa). A glycan (N-linked (GlcNAc...) asparagine) is linked at asparagine 83. Cysteines 99 and 102 form a disulfide. Residues 197 to 217 form a helical membrane-spanning segment; that stretch reads NYSGTIALALLVSLVGGLLYL. Topologically, residues 218–221 are cytoplasmic; it reads RRNN. A helical transmembrane segment spans residues 222–242; sequence LEFIYNKTGWAMVSLCIVFAM. The Lumenal portion of the chain corresponds to 243–276; sequence TSGQMWNHIRGPPYAHKNPHNGQVSYIHGSSQAQ. Residues 277-297 traverse the membrane as a helical segment; that stretch reads FVAESHIILVLNAAITMGMVL. Residues 298-312 lie on the Cytoplasmic side of the membrane; that stretch reads LNEAATSKGDVGKRR. Residues 313-333 traverse the membrane as a helical segment; that stretch reads IICLVGLGLVVFFFSFLLSIF. Over 334–347 the chain is Lumenal; sequence RSKYHGYPYSFLIK.

Belongs to the OST3/OST6 family. Accessory component of the STT3B-containing form of the oligosaccharyltransferase (OST) complex. OST exists in two different complex forms which contain common core subunits RPN1, RPN2, OST48, OST4, DAD1 and TMEM258, either STT3A or STT3B as catalytic subunits, and form-specific accessory subunits. OST can form stable complexes with the Sec61 complex or with both the Sec61 and TRAP complexes. The association of TUSC3 or MAGT1 with the STT3B-containing complex seems to be mutually exclusvice.

It is found in the endoplasmic reticulum membrane. It participates in protein modification; protein glycosylation. Functionally, acts as accessory component of the N-oligosaccharyl transferase (OST) complex which catalyzes the transfer of a high mannose oligosaccharide from a lipid-linked oligosaccharide donor to an asparagine residue within an Asn-X-Ser/Thr consensus motif in nascent polypeptide chains. Involved in N-glycosylation of STT3B-dependent substrates. Specifically required for the glycosylation of a subset of acceptor sites that are near cysteine residues; in this function seems to act redundantly with MAGT1. In its oxidized form proposed to form transient mixed disulfides with a glycoprotein substrate to facilitate access of STT3B to the unmodified acceptor site. Also has oxidoreductase-independent functions in the STT3B-containing OST complex possibly involving substrate recognition. Could indirectly play a role in Mg(2+) transport. This chain is Dolichyl-diphosphooligosaccharide--protein glycosyltransferase subunit TUSC3 (Tusc3), found in Mus musculus (Mouse).